Here is a 279-residue protein sequence, read N- to C-terminus: 1D-myo-inositol 2-acetamido-2-deoxy-alpha-D-glucopyranoside deacetylase (279 aa).

The Zn(2+) site is built by histidine 12, aspartate 15, and histidine 146.

It belongs to the MshB deacetylase family. Requires Zn(2+) as cofactor.

It carries out the reaction 1D-myo-inositol 2-acetamido-2-deoxy-alpha-D-glucopyranoside + H2O = 1D-myo-inositol 2-amino-2-deoxy-alpha-D-glucopyranoside + acetate. Its function is as follows. Catalyzes the deacetylation of 1D-myo-inositol 2-acetamido-2-deoxy-alpha-D-glucopyranoside (GlcNAc-Ins) in the mycothiol biosynthesis pathway. The polypeptide is 1D-myo-inositol 2-acetamido-2-deoxy-alpha-D-glucopyranoside deacetylase (Mycobacteroides abscessus (strain ATCC 19977 / DSM 44196 / CCUG 20993 / CIP 104536 / JCM 13569 / NCTC 13031 / TMC 1543 / L948) (Mycobacterium abscessus)).